The following is a 913-amino-acid chain: Protein translocase subunit SecA (913 aa).

ATP is bound by residues glutamine 87, 105 to 109 (GEGKT), and aspartate 512. The interval 864 to 913 (LDQPEEEPAEVEGQPDVAVASVRTEPKIGRNEPCPCGSGKKYKHCHGQVQ) is disordered. Zn(2+) is bound by residues cysteine 897, cysteine 899, cysteine 908, and histidine 909. The segment covering 903–913 (KKYKHCHGQVQ) has biased composition (basic residues).

This sequence belongs to the SecA family. Monomer and homodimer. Part of the essential Sec protein translocation apparatus which comprises SecA, SecYEG and auxiliary proteins SecDF-YajC and YidC. It depends on Zn(2+) as a cofactor.

The protein localises to the cell inner membrane. It is found in the cytoplasm. It carries out the reaction ATP + H2O + cellular proteinSide 1 = ADP + phosphate + cellular proteinSide 2.. In terms of biological role, part of the Sec protein translocase complex. Interacts with the SecYEG preprotein conducting channel. Has a central role in coupling the hydrolysis of ATP to the transfer of proteins into and across the cell membrane, serving both as a receptor for the preprotein-SecB complex and as an ATP-driven molecular motor driving the stepwise translocation of polypeptide chains across the membrane. In Stutzerimonas stutzeri (strain A1501) (Pseudomonas stutzeri), this protein is Protein translocase subunit SecA.